Consider the following 500-residue polypeptide: Alpha-L-arabinofuranosidase (500 aa).

A signal peptide spans 1 to 21 (MLSNARIIAAGCIAAGSLVAA). Asn467 carries an N-linked (GlcNAc...) asparagine glycan.

It belongs to the glycosyl hydrolase 54 family.

The catalysed reaction is Hydrolysis of terminal non-reducing alpha-L-arabinofuranoside residues in alpha-L-arabinosides.. The protein operates within glycan metabolism; L-arabinan degradation. The polypeptide is Alpha-L-arabinofuranosidase (abf1) (Hypocrea jecorina (Trichoderma reesei)).